The following is a 670-amino-acid chain: DNA-binding transcriptional activator HyfR (670 aa).

The region spanning 169–311 (DLDDLIADVA…HIADRIAIAV (143 aa)) is the GAF domain. Residues 207–221 (CSDLSASHCACLPRC) carry the Cys-rich segment, might bind a metal cluster motif. A Sigma-54 factor interaction domain is found at 347–576 (IIYQSQAMED…LENVIERAVL (230 aa)). Residues 375 to 382 (GETGTGKE) and 438 to 447 (ADGGTLFLDE) contribute to the ATP site. Positions 641 to 660 (PRGAATRLGMKRTTLLSRMQ) form a DNA-binding region, H-T-H motif.

Its function is as follows. A transcriptional activator of its own operon; when overexpressed operon expression is strongly enhanced by low pH (under pH 6.0), strongly inhibited by O(2) but only weakly stimulated by fumarate. Expression in situ is very weak. The sequence is that of DNA-binding transcriptional activator HyfR from Escherichia coli (strain K12).